The chain runs to 920 residues: MNRRDFIKSTAAAAACASAGIALPANLNAEENHGWRWDKAVCRFCGTGCGIMVATKNGKIVAVKGDPEAPVNRGLNCIKGYFNAKIMYGDDRITEPLLRVNSKGEFDKHGKFAPVSWKKAFDVMEKEFKKAYKEKGPTGIAVFGSGQYTIQEGYAAAKLVKAGFRSNNIDPNARHCMASAVVGFMQVFGIDEPSGCFDDIELTDTIVTWGANMAEMHPILWSRVNDRKLSAPEKVKVVNLSTFSSRTSSIADIEIIFRPSTDVAIWNYIAREIVYNHPEAIDTEFLKNCEFATGPVDIGYGMRNNPNHPKFSEAEKDTVSHQVSKKLSQAEGVSLAYLGLKAGDTLEMKNAKKAGKHWAISFEEFKKALAPYTLDYVAEIAKGDENESIEQFKEKLQNLANLYIEKNRKIVSFWTMGFNQHTRGTWVNEQSYMVHFLLGKQASPGNGAFSLTGQPSACGTAREVGTFCHRLPADMVVANPKHREITEKIWKLPAGTINPKNGSHFVGLMRDLEDGKVKFAWVQVNNPWHNTANANHWIKAAREMDNFIVVSDCYPGISAKVADLILPSAMIYEKWGAYGNAERRTQHWRQQVLPVGDAMSDTWQILEFAKRFKLKDVWGEQKIDDKLTLPNVLEEAKTMGYDENATLFDILFANDYYKGFKPEKIKFDNSEVNGDTRNVKGSDGEVFKGYGFFIQKALWEEYRKFGLGHGHDLADFDTYHKVRGLKWPVVDGKETSWRFNKKYDPYAKKEETSGDFAFYGNKNKKLDKGDLIGIKGEDKVDINNKAKIFFRPYMDPPEIPSEEYPFWLCTGRVLEHWHSGTMTMRVPELYRAVPEALCYMNPLDAEKLKLSQGDTIWIESRRGKVKVKIDTRGRNIPPVGLVYVPWFDENVFINKVTLDATCPLSSETDYKKCAVKIYKA.

The segment at residues 1-29 is a signal peptide (tat-type signal); sequence MNRRDFIKSTAAAAACASAGIALPANLNA. A 4Fe-4S Mo/W bis-MGD-type domain is found at 35–91; it reads WRWDKAVCRFCGTGCGIMVATKNGKIVAVKGDPEAPVNRGLNCIKGYFNAKIMYGDD. [4Fe-4S] cluster-binding residues include C42, C45, C49, and C77. Mo-bis(molybdopterin guanine dinucleotide) contacts are provided by residues K79, Q147, N172, C176, 209-216, M416, Q420, N526, 551-552, K574, D601, and 810-819; these read WGANMAEM, SD, and TGRVLEHWHS. W886 provides a ligand contact to substrate. Mo-bis(molybdopterin guanine dinucleotide) is bound by residues N894 and K911.

It belongs to the prokaryotic molybdopterin-containing oxidoreductase family. NasA/NapA/NarB subfamily. As to quaternary structure, component of the periplasmic nitrate reductase NapAB complex composed of NapA and NapB. [4Fe-4S] cluster serves as cofactor. Mo-bis(molybdopterin guanine dinucleotide) is required as a cofactor. Predicted to be exported by the Tat system. The position of the signal peptide cleavage has not been experimentally proven.

It is found in the periplasm. It catalyses the reaction 2 Fe(II)-[cytochrome] + nitrate + 2 H(+) = 2 Fe(III)-[cytochrome] + nitrite + H2O. In terms of biological role, catalytic subunit of the periplasmic nitrate reductase complex NapAB. Receives electrons from NapB and catalyzes the reduction of nitrate to nitrite. This Campylobacter hominis (strain ATCC BAA-381 / DSM 21671 / CCUG 45161 / LMG 19568 / NCTC 13146 / CH001A) protein is Periplasmic nitrate reductase.